We begin with the raw amino-acid sequence, 262 residues long: Tetratricopeptide repeat protein 33 (262 aa).

Residues Ala-17–Lys-63 form a disordered region. TPR repeat units lie at residues Ser-59–Asp-92, Ala-93–Ser-126, and Trp-127–Asn-160. Ser-197 carries the phosphoserine modification.

This chain is Tetratricopeptide repeat protein 33 (Ttc33), found in Mus musculus (Mouse).